Consider the following 582-residue polypeptide: MQRPAIIAERAPNLDPAVLAAMQSQPSGVTASDDWTAAMDRIMALTARSPDAFRQQPQANRFSAILEAVVPSRTNPTHEKVLTIVNALLDSKAIRKDEAGLIYNALLERVARYNSTNVQANLDRMGTDVKEALAQRERFHRDGNLGSLVALNAFLSTQPANVPRGQEDYTNFISALRLMVTEVPQSEVYQSGPDYFFQTSRQGLQTVNLTQAFKNLQGLWGVRAPVGDRSTLSSLLTPNSRLLLLLIAPFTNTNSLSRDSYLGHLVTLYREAIGQAQVDEQTYQEITSVSRALGQEDTGSLEATLNFLLTNRRQQVPPQYTLNAEEERILRYVQQSVSLYLMREGATPSAALDMTARNMEPSFYASNRAFINRLMDYLHRAAAMNGEYFTNAILNPHWLPPPGFYTGEFDLPEGNDGFLWDDVTDSLFSPAVIGHHGKKEAGDEGPLLDSRASSPFPSLTSLPASVNSGRTTRPRLTGESEYLNDPILFPVRDKNFPNNGIESLVDKMSRWKTYAQERREWEERQPRPVRPPRQRWQRRKKGAHAGDEGSDDSADDSSVLDLGGSGNPFAHLRPQGCIGSLY.

The tract at residues 1 to 114 is peripentonal hexon-tethering domain; the sequence is MQRPAIIAER…ALLERVARYN (114 aa). A binding to hexon-linking protein region spans residues 146–259; sequence GSLVALNAFL…FTNTNSLSRD (114 aa). S233 bears the Phosphoserine; by host mark. T282 carries the phosphothreonine; by host modification. A disordered region spans residues 437–479; sequence GKKEAGDEGPLLDSRASSPFPSLTSLPASVNSGRTTRPRLTGE. Residues 451–471 show a composition bias toward polar residues; the sequence is RASSPFPSLTSLPASVNSGRT. 2 positions are modified to phosphoserine; by host: S458 and S465. Y482 carries the phosphotyrosine; by host modification. Residue S503 is modified to Phosphoserine; by host. Over residues 517 to 526 the composition is skewed to basic and acidic residues; sequence ERREWEERQP. The disordered stretch occupies residues 517-582; sequence ERREWEERQP…RPQGCIGSLY (66 aa). The span at 530 to 543 shows a compositional bias: basic residues; that stretch reads RPPRQRWQRRKKGA. A propeptide spanning residues 566-582 is cleaved from the precursor; that stretch reads GNPFAHLRPQGCIGSLY.

Belongs to the adenoviridae hexon-linking protein IIIa family. In terms of assembly, interacts with hexon proteins; this interaction tethers the peripentonal hexons to hexons situated in the facet. Interacts with the penton protein (via N-terminus). Interacts with packaging protein 3; this interaction is required to promote correct genome packaging. In terms of processing, cleaved near the C-terminus by the viral protease during virion maturation to form the mature protein.

It is found in the virion. Its subcellular location is the host nucleus. Functionally, structural component of the virion that acts as a cement protein on the capsid exterior which mediates the interactions between the hexons, including the peripentonal hexons, and reaches all the way to the penton vertices. Two hexon linking proteins IIIa, one from each facet, stabilize the unique edge interface between a pair of facets. As the virus enters the host cell, hexon linking proteins IIIa are shed concomitant with virion acidification in the endosome. During virus assembly, seems to play a role in the serotype specificity of the packaging of viral DNA via its interaction with packaging protein 3. In Human adenovirus A serotype 12 (HAdV-12), this protein is Pre-hexon-linking protein IIIa.